Here is a 262-residue protein sequence, read N- to C-terminus: Phosphatidylserine decarboxylase proenzyme (262 aa).

Catalysis depends on charge relay system; for autoendoproteolytic cleavage activity residues aspartate 86, histidine 142, and serine 226. Catalysis depends on serine 226, which acts as the Schiff-base intermediate with substrate; via pyruvic acid; for decarboxylase activity. Pyruvic acid (Ser); by autocatalysis is present on serine 226.

It belongs to the phosphatidylserine decarboxylase family. PSD-B subfamily. Prokaryotic type I sub-subfamily. As to quaternary structure, heterodimer of a large membrane-associated beta subunit and a small pyruvoyl-containing alpha subunit. Pyruvate is required as a cofactor. Is synthesized initially as an inactive proenzyme. Formation of the active enzyme involves a self-maturation process in which the active site pyruvoyl group is generated from an internal serine residue via an autocatalytic post-translational modification. Two non-identical subunits are generated from the proenzyme in this reaction, and the pyruvate is formed at the N-terminus of the alpha chain, which is derived from the carboxyl end of the proenzyme. The autoendoproteolytic cleavage occurs by a canonical serine protease mechanism, in which the side chain hydroxyl group of the serine supplies its oxygen atom to form the C-terminus of the beta chain, while the remainder of the serine residue undergoes an oxidative deamination to produce ammonia and the pyruvoyl prosthetic group on the alpha chain. During this reaction, the Ser that is part of the protease active site of the proenzyme becomes the pyruvoyl prosthetic group, which constitutes an essential element of the active site of the mature decarboxylase.

Its subcellular location is the cell membrane. The catalysed reaction is a 1,2-diacyl-sn-glycero-3-phospho-L-serine + H(+) = a 1,2-diacyl-sn-glycero-3-phosphoethanolamine + CO2. The protein operates within phospholipid metabolism; phosphatidylethanolamine biosynthesis; phosphatidylethanolamine from CDP-diacylglycerol: step 2/2. Its function is as follows. Catalyzes the formation of phosphatidylethanolamine (PtdEtn) from phosphatidylserine (PtdSer). The protein is Phosphatidylserine decarboxylase proenzyme of Bacillus cereus (strain AH820).